The chain runs to 536 residues: Membrane protein insertase YidC (536 aa).

A run of 5 helical transmembrane segments spans residues 7–27 (FFIFAFLFVSFLLWQAWQSQS), 338–358 (LLSTIHNFIGNWGFSIILITF), 419–439 (LPVFIQMPIFLSLYYMLIGSV), 453–473 (LSDQDPYYVLPIFMGLTMFFI), and 494–514 (PFIFTVFFLWFPSGLVLYYIV).

This sequence belongs to the OXA1/ALB3/YidC family. Type 1 subfamily. As to quaternary structure, interacts with the Sec translocase complex via SecD. Specifically interacts with transmembrane segments of nascent integral membrane proteins during membrane integration.

Its subcellular location is the cell membrane. Functionally, required for the insertion and/or proper folding and/or complex formation of integral membrane proteins into the membrane. Involved in integration of membrane proteins that insert both dependently and independently of the Sec translocase complex, as well as at least some lipoproteins. Aids folding of multispanning membrane proteins. This is Membrane protein insertase YidC from Buchnera aphidicola subsp. Schizaphis graminum (strain Sg).